Reading from the N-terminus, the 429-residue chain is Prenyltransferase okaC (429 aa).

Dimethylallyl diphosphate-binding residues include R101, K189, Y191, K257, Y259, Y342, Y406, and Y410.

It belongs to the tryptophan dimethylallyltransferase family.

The catalysed reaction is cyclo(L-Trp-L-Trp) + 2 dimethylallyl diphosphate = cyclo(N(8)-(alpha,alpha-dimethylallyl)-L-Trp-6a-(alpha,alpha-dimethylallyl)-L-Trp) + 2 diphosphate. It participates in alkaloid biosynthesis. In terms of biological role, prenyltransferase; part of the gene cluster that mediates the biosynthesis of okaramine B, a prenylated indole alkaloid that possesses an unusual octacyclic ring system, including a four-membered azetidine ring and an eight-membered azocine ring, and that exhibits insecticidal activity against silkworm larvae. Within the pathway, okaC performs asymmetric reverse prenylation of cyclo(L-Trp-L-Trp) at N-1 and C-2' of the indole ring to produce the cyclic prenylated tryptophan dimer cyclo(N8-(alpha,alpha-dimethylallyl)-L-Trp-6a-(alpha,alpha-dime-thylallyl)-L-Trp). The biosynthesis begins with the NRPS okaA that condenses two tryptophan molecules into cyclo(L-Trp-L-Trp). Prenylation by the prenyltransferase okaC then leads to the formation of cyclo(N8-(alpha,alpha-dimethylallyl)-L-Trp-6a-(alpha,alpha-dime-thylallyl)-L-Trp). This is followed by indole 2,3-epoxidation by the FAD-dependent monooxygenase okaB to facilitate the formation of the hexahydropyrrolo[2,3-b]indole (HPI) moiety of okaramine C. The cytochrome P450 monooxygenase okaD then likely catalyzes formation of the eight-membered ring of okaramine A. The dioxygenase okaE further forms the unusual 2-dimethyl-3-methyl-azetidine ring to yield 12-deshydroxyl okaramine E, as well as the hydroxylation of 12-deshydroxyl okaramine E to produce okaramine E. The cytochrome P450 monoxygenase okaG converts 12-deshydroxyl okaramine E into 3-desmethyl okaramine B which is further methylated by the methyltransferase okaF into okaramine B. In a shunt pathway, okaG and okaF together are also able to convert okaramine E into okaramine D. Okaramine H is produced by nonenzymatic conversion from okaramine A. The protein is Prenyltransferase okaC of Penicillium ochrochloron.